The primary structure comprises 156 residues: CD-NTase/cGAS isopeptidase (156 aa).

One can recognise an MPN domain in the interval 16–156; sequence LVVIMGHVVT…LITVFKKIES (141 aa). E39 (proton donor/acceptor) is an active-site residue. H101, H103, and D114 together coordinate Zn(2+). The short motif at 101-114 is the JAMM motif element; that stretch reads HTHPEDRPFPSATD.

This sequence belongs to the peptidase M67B family. Cap3 isopeptidase subfamily. The cofactor is Zn(2+).

With respect to regulation, cleavage of conjugated proteins is inhibited by EDTA. Metalloprotease priming reversal component of a CBASS system. CBASS (cyclic oligonucleotide-based antiphage signaling system) provides immunity against bacteriophages. The CD-NTase protein (DncV) synthesizes cyclic nucleotides in response to infection; these serve as specific second messenger signals. The signals activate a diverse range of effectors, leading to bacterial cell death and thus abortive phage infection. A type II-A(GA) CBASS system. Its function is as follows. Reverses the primed state of DncV, the CD-NTase. Cleaves a DncV-GFP (green fluorescent protein) fusion protein precisely at the C-terminus of DncV. Overexpression decreases the efficacy of CBASS protection against phages T2, T4, T5 and T6, blocks formation of DncV-conjugates in vivo, and inhibits in vivo activation of DncV. Antagonism of phage defense upon overexpression is CBASS-system specific, Cap3 from this bacteria only antagonizes its cognate CBASS system and not that of C.freundii, E.coli or E.hormaechei. Functionally, protects E.coli against phage infection. When the CBASS operon (capV-dncV-cap2-cap3) is introduced in E.coli MG1655 there is about 100-fold protection against phages P1 and T2. When the operon is introduced in E.coli MG1655 there is a more than 10(3) decrease in the efficiency of T2 plaque formation. Protects 100-fold against phage T5, offers no protection against T7. When the operon is introduced in E.coli MG1655 it protects against phages T2, T4, T5 and T6. Another paper shows the operon confers protection against phages P1, T2, T5 and T6 but not T4 or lambda. This chain is CD-NTase/cGAS isopeptidase, found in Vibrio cholerae serotype O1 (strain ATCC 39315 / El Tor Inaba N16961).